Here is a 507-residue protein sequence, read N- to C-terminus: BPI fold-containing family C protein (507 aa).

The N-terminal stretch at 1–23 (MCTKTIPVLWGCFLLWNLYVSSS) is a signal peptide. Residues Asn-79, Asn-92, and Asn-113 are each glycosylated (N-linked (GlcNAc...) asparagine). Cys-161 and Cys-200 are joined by a disulfide. Asn-213, Asn-225, Asn-257, Asn-301, Asn-355, Asn-372, and Asn-415 each carry an N-linked (GlcNAc...) asparagine glycan.

The protein belongs to the BPI/LBP/Plunc superfamily. BPI/LBP family. As to expression, detected in the basal layer of the epidermis from inflammatory skin from psoriasis patients, but not in normal skin.

The protein localises to the secreted. In Homo sapiens (Human), this protein is BPI fold-containing family C protein (BPIFC).